The chain runs to 183 residues: ATP synthase subunit delta (183 aa).

It belongs to the ATPase delta chain family. As to quaternary structure, F-type ATPases have 2 components, F(1) - the catalytic core - and F(0) - the membrane proton channel. F(1) has five subunits: alpha(3), beta(3), gamma(1), delta(1), epsilon(1). F(0) has three main subunits: a(1), b(2) and c(10-14). The alpha and beta chains form an alternating ring which encloses part of the gamma chain. F(1) is attached to F(0) by a central stalk formed by the gamma and epsilon chains, while a peripheral stalk is formed by the delta and b chains.

Its subcellular location is the cell inner membrane. Functionally, f(1)F(0) ATP synthase produces ATP from ADP in the presence of a proton or sodium gradient. F-type ATPases consist of two structural domains, F(1) containing the extramembraneous catalytic core and F(0) containing the membrane proton channel, linked together by a central stalk and a peripheral stalk. During catalysis, ATP synthesis in the catalytic domain of F(1) is coupled via a rotary mechanism of the central stalk subunits to proton translocation. Its function is as follows. This protein is part of the stalk that links CF(0) to CF(1). It either transmits conformational changes from CF(0) to CF(1) or is implicated in proton conduction. The polypeptide is ATP synthase subunit delta (Solidesulfovibrio magneticus (strain ATCC 700980 / DSM 13731 / RS-1) (Desulfovibrio magneticus)).